The following is a 170-amino-acid chain: Peptide deformylase (170 aa).

Positions 94 and 136 each coordinate Fe cation. Residue E137 is part of the active site. H140 contacts Fe cation.

It belongs to the polypeptide deformylase family. Fe(2+) serves as cofactor.

The catalysed reaction is N-terminal N-formyl-L-methionyl-[peptide] + H2O = N-terminal L-methionyl-[peptide] + formate. Removes the formyl group from the N-terminal Met of newly synthesized proteins. Requires at least a dipeptide for an efficient rate of reaction. N-terminal L-methionine is a prerequisite for activity but the enzyme has broad specificity at other positions. The chain is Peptide deformylase from Agrobacterium fabrum (strain C58 / ATCC 33970) (Agrobacterium tumefaciens (strain C58)).